The primary structure comprises 276 residues: Nickel import system permease protein NikC (276 aa).

5 helical membrane-spanning segments follow: residues 10–30 (LIFF…FFVS), 73–93 (LFVT…LGLF), 108–128 (FIDV…ASFF), 186–206 (IIPA…LYIS), and 238–258 (IMLI…NLTG). The region spanning 69 to 258 (ARSTLFVTVL…ITILIFNLTG (190 aa)) is the ABC transmembrane type-1 domain.

Belongs to the binding-protein-dependent transport system permease family. OppBC subfamily. As to quaternary structure, the complex is composed of two ATP-binding proteins (NikD and NikE), two transmembrane proteins (NikB and NikC) and a solute-binding protein (NikA).

It localises to the cell membrane. In terms of biological role, part of the ABC transporter complex NikABCDE (Opp2) involved in nickel import. Probably responsible for the translocation of the substrate across the membrane. This chain is Nickel import system permease protein NikC, found in Staphylococcus aureus (strain bovine RF122 / ET3-1).